Reading from the N-terminus, the 689-residue chain is Elongation factor G (689 aa).

One can recognise a tr-type G domain in the interval 9-283; sequence AKFRNIGIMA…AIIEFMPSPL (275 aa). Residues 18–25, 82–86, and 136–139 contribute to the GTP site; these read AHIDAGKT, DTPGH, and NKMD.

The protein belongs to the TRAFAC class translation factor GTPase superfamily. Classic translation factor GTPase family. EF-G/EF-2 subfamily.

Its subcellular location is the cytoplasm. In terms of biological role, catalyzes the GTP-dependent ribosomal translocation step during translation elongation. During this step, the ribosome changes from the pre-translocational (PRE) to the post-translocational (POST) state as the newly formed A-site-bound peptidyl-tRNA and P-site-bound deacylated tRNA move to the P and E sites, respectively. Catalyzes the coordinated movement of the two tRNA molecules, the mRNA and conformational changes in the ribosome. The chain is Elongation factor G from Clostridium botulinum (strain Okra / Type B1).